Consider the following 1212-residue polypeptide: Nucleolar protein 6 (1212 aa).

2 disordered regions span residues Met1 to Ile72 and Lys1156 to Ser1212. Basic residues predominate over residues Leu1197 to Ser1212.

This sequence belongs to the NRAP family. As to quaternary structure, part of the small subunit (SSU) processome, composed of more than 70 proteins and the RNA chaperone small nucleolar RNA (snoRNA) U3.

It localises to the nucleus. The protein resides in the nucleolus. The protein localises to the chromosome. In terms of biological role, part of the small subunit (SSU) processome, first precursor of the small eukaryotic ribosomal subunit. During the assembly of the SSU processome in the nucleolus, many ribosome biogenesis factors, an RNA chaperone and ribosomal proteins associate with the nascent pre-rRNA and work in concert to generate RNA folding, modifications, rearrangements and cleavage as well as targeted degradation of pre-ribosomal RNA by the RNA exosome. The polypeptide is Nucleolar protein 6 (Drosophila persimilis (Fruit fly)).